The primary structure comprises 158 residues: Small ribosomal subunit protein uS7 (158 aa).

This sequence belongs to the universal ribosomal protein uS7 family. In terms of assembly, part of the 30S ribosomal subunit. Contacts proteins S9 and S11.

Its function is as follows. One of the primary rRNA binding proteins, it binds directly to 16S rRNA where it nucleates assembly of the head domain of the 30S subunit. Is located at the subunit interface close to the decoding center, probably blocks exit of the E-site tRNA. In Bacteroides fragilis (strain YCH46), this protein is Small ribosomal subunit protein uS7.